A 591-amino-acid polypeptide reads, in one-letter code: Mono(ADP-ribosyl)transferase SpvB (591 aa).

Residues 373–576 (PMMGGNSSRP…LRLSDDATAD (204 aa)) enclose the TR mART core domain. Residues Arg471, Ser501, and Glu538 contribute to the active site.

The protein belongs to the SpvB family.

Its subcellular location is the secreted. It carries out the reaction L-arginyl-[protein] + NAD(+) = N(omega)-(ADP-D-ribosyl)-L-arginyl-[protein] + nicotinamide + H(+). In terms of biological role, mono-ADP-ribosylates eukaryotic muscle and non-muscle actin on 'Arg-177'. ADP-ribosylation prevents the polymerization of G-actin to F-actin, causing actin filament depolymerization, destruction of the cytoskeleton and cytotoxicity. Does not possess NAD(+)-glycohydrolase activity, unlike most mART enzymes. The sequence is that of Mono(ADP-ribosyl)transferase SpvB (spvB) from Salmonella typhimurium (strain 14028s / SGSC 2262).